The following is a 215-amino-acid chain: MNKYLEYPEVESNRQPAKKLVVLLHGVGSDGHDLIGLVPYIKNDLPDCHFISPHGIEAYDMMPYGRQWFSLQDRSPHIIAKLIANNISKLEDIIKQKQEELNLTNKDTIIIGFSQGTMIGLYLTLIQREPFFCTIGFSGALIPPMEVNNKLTPICLIHGELDEVVGVSEMYNASNYLSKLHIEHSGHKLTSLAHSIDGRGLEIAINFINTCHTVV.

Catalysis depends on charge relay system residues Ser114, Asp162, and His194.

It belongs to the AB hydrolase superfamily. AB hydrolase 2 family.

This is an uncharacterized protein from Rickettsia felis (strain ATCC VR-1525 / URRWXCal2) (Rickettsia azadi).